Reading from the N-terminus, the 119-residue chain is Ribonuclease P protein component (119 aa).

The protein belongs to the RnpA family. As to quaternary structure, consists of a catalytic RNA component (M1 or rnpB) and a protein subunit.

It catalyses the reaction Endonucleolytic cleavage of RNA, removing 5'-extranucleotides from tRNA precursor.. Its function is as follows. RNaseP catalyzes the removal of the 5'-leader sequence from pre-tRNA to produce the mature 5'-terminus. It can also cleave other RNA substrates such as 4.5S RNA. The protein component plays an auxiliary but essential role in vivo by binding to the 5'-leader sequence and broadening the substrate specificity of the ribozyme. The polypeptide is Ribonuclease P protein component (Streptococcus equi subsp. zooepidemicus (strain MGCS10565)).